The primary structure comprises 548 residues: Glutamyl-tRNA(Gln) amidotransferase subunit B, chloroplastic/mitochondrial (548 aa).

Belongs to the GatB/GatE family. GatB subfamily. In terms of assembly, subunit of the heterotrimeric GatCAB amidotransferase (AdT) complex, composed of A, B and C subunits.

The protein resides in the mitochondrion. The protein localises to the plastid. It is found in the chloroplast. The catalysed reaction is L-glutamyl-tRNA(Gln) + L-glutamine + ATP + H2O = L-glutaminyl-tRNA(Gln) + L-glutamate + ADP + phosphate + H(+). Functionally, allows the formation of correctly charged Gln-tRNA(Gln) through the transamidation of misacylated Glu-tRNA(Gln) in chloroplasts and mitochondria. The reaction takes place in the presence of glutamine and ATP through an activated gamma-phospho-Glu-tRNA(Gln). The sequence is that of Glutamyl-tRNA(Gln) amidotransferase subunit B, chloroplastic/mitochondrial from Sorghum bicolor (Sorghum).